The sequence spans 988 residues: Bifunctional glutamine synthetase adenylyltransferase/adenylyl-removing enzyme (988 aa).

Positions 1 to 472 (MTKRETVERR…RYSALFEQET (472 aa)) are adenylyl removase. Positions 476–988 (GEAGNLVFTG…AFVAVVKNGG (513 aa)) are adenylyl transferase.

The protein belongs to the GlnE family. The cofactor is Mg(2+).

It carries out the reaction [glutamine synthetase]-O(4)-(5'-adenylyl)-L-tyrosine + phosphate = [glutamine synthetase]-L-tyrosine + ADP. It catalyses the reaction [glutamine synthetase]-L-tyrosine + ATP = [glutamine synthetase]-O(4)-(5'-adenylyl)-L-tyrosine + diphosphate. Its function is as follows. Involved in the regulation of glutamine synthetase GlnA, a key enzyme in the process to assimilate ammonia. When cellular nitrogen levels are high, the C-terminal adenylyl transferase (AT) inactivates GlnA by covalent transfer of an adenylyl group from ATP to specific tyrosine residue of GlnA, thus reducing its activity. Conversely, when nitrogen levels are low, the N-terminal adenylyl removase (AR) activates GlnA by removing the adenylyl group by phosphorolysis, increasing its activity. The regulatory region of GlnE binds the signal transduction protein PII (GlnB) which indicates the nitrogen status of the cell. The sequence is that of Bifunctional glutamine synthetase adenylyltransferase/adenylyl-removing enzyme from Agrobacterium fabrum (strain C58 / ATCC 33970) (Agrobacterium tumefaciens (strain C58)).